The sequence spans 461 residues: Argininosuccinate lyase (461 aa).

This sequence belongs to the lyase 1 family. Argininosuccinate lyase subfamily.

The protein resides in the cytoplasm. The catalysed reaction is 2-(N(omega)-L-arginino)succinate = fumarate + L-arginine. It participates in amino-acid biosynthesis; L-arginine biosynthesis; L-arginine from L-ornithine and carbamoyl phosphate: step 3/3. This Chlorobium chlorochromatii (strain CaD3) protein is Argininosuccinate lyase.